A 184-amino-acid chain; its full sequence is Large ribosomal subunit protein uL6 (184 aa).

This sequence belongs to the universal ribosomal protein uL6 family. In terms of assembly, part of the 50S ribosomal subunit.

This protein binds to the 23S rRNA, and is important in its secondary structure. It is located near the subunit interface in the base of the L7/L12 stalk, and near the tRNA binding site of the peptidyltransferase center. The protein is Large ribosomal subunit protein uL6 of Methanosphaera stadtmanae (strain ATCC 43021 / DSM 3091 / JCM 11832 / MCB-3).